A 146-amino-acid polypeptide reads, in one-letter code: Large ribosomal subunit protein uL13 (146 aa).

Residues 126 to 146 (AGPKHPHAAQQPKVYEPRPRG) are disordered.

The protein belongs to the universal ribosomal protein uL13 family. As to quaternary structure, part of the 50S ribosomal subunit.

Its function is as follows. This protein is one of the early assembly proteins of the 50S ribosomal subunit, although it is not seen to bind rRNA by itself. It is important during the early stages of 50S assembly. The sequence is that of Large ribosomal subunit protein uL13 from Roseiflexus castenholzii (strain DSM 13941 / HLO8).